Here is a 487-residue protein sequence, read N- to C-terminus: Transcriptional adapter ADA2b (487 aa).

Residues 1 to 13 (MGRSRGNFQNFED) show a composition bias toward polar residues. The segment at 1–25 (MGRSRGNFQNFEDPTQRTRKKKNAA) is disordered. The ZZ-type zinc finger occupies 42–98 (GGKYNCDYCQKDITGKIRIKCAVCPDFDLCIECMSVGAEITPHKCDHPYRVMGNLTF). The Zn(2+) site is built by Cys-47, Cys-50, Cys-62, Cys-65, Cys-71, Cys-74, His-84, and His-88. An SANT domain is found at 100 to 152 (LICPDWSADDEMLLLEGLEIYGLGNWAEVAEHVGTKSKEQCLEHYRNIYLNSP). Residue Lys-216 is modified to N6-acetyllysine; by GCN5. The segment covering 368 to 383 (RKRKRENEEGMNRGKE) has biased composition (basic and acidic residues). The segment at 368–388 (RKRKRENEEGMNRGKESGQFG) is disordered. An SWIRM domain is found at 401–487 (QASSSYVNDL…MLVKKGIAQL (87 aa)).

In terms of assembly, interacts in vitro with the HAT domain of GCN5 and with the DNA-binding domain of the transcriptional activator DREB1B/CBF1. Interacts with BZIP11. In terms of processing, acetylated in vitro by GCN5, but acetylation is not essential for biological activity. In terms of tissue distribution, expressed in roots, leaves, stems, flowers and siliques, with the strongest activity in the meristematic zones.

It is found in the nucleus. Its function is as follows. Required for the function of some acidic activation domains, which activate transcription from a distant site. The exact mechanism of action is not yet known. ADA2 stimulates the acetyltransferase activity of GCN5 on free histones or nucleosomes, probably by opening up the promoter region. Mediates auxin and cytokinin signals in the control of cell proliferation and might be involved in repression of a freezing tolerance pathway at warm temperature. Involved in the positive regulation of salt-induced gene expression by maintaining locus-specific acetylation of histones H4 and H3. This Arabidopsis thaliana (Mouse-ear cress) protein is Transcriptional adapter ADA2b (ADA2B).